A 185-amino-acid chain; its full sequence is Elongation factor P (185 aa).

Belongs to the elongation factor P family.

It localises to the cytoplasm. It functions in the pathway protein biosynthesis; polypeptide chain elongation. Its function is as follows. Involved in peptide bond synthesis. Stimulates efficient translation and peptide-bond synthesis on native or reconstituted 70S ribosomes in vitro. Probably functions indirectly by altering the affinity of the ribosome for aminoacyl-tRNA, thus increasing their reactivity as acceptors for peptidyl transferase. In Trichormus variabilis (strain ATCC 29413 / PCC 7937) (Anabaena variabilis), this protein is Elongation factor P.